Consider the following 261-residue polypeptide: MSRYAILGSTGNCGTALIENVLDSSMTEVHAFCRNQEKLERLVPRVISDARVKVFVGGIGDTETLAACLHGCNAVFLCITTNDNVPGCRVAQDTALGVVKVLERSRADGFLPMPKLVLLSSATIDDVLSRNTPWVLRSILLKSASHVYEDLRKTEILLRAEQDWLTTIFIKPGALSVDIQRGHALSLTDEDSPVSYLDLAAAMIEAVNDPQGRYDMRNVGVVNTHGRANFPSGTPLCIAVGLLSHFAPFLHPYLPSGTGPR.

Belongs to the avfA family.

It participates in secondary metabolite biosynthesis. Functionally, oxidoreductase; part of the gene cluster that mediates the biosynthesis of pestheic acid, a diphenyl ether which is a biosynthetic precursor of the unique chloropupukeananes. The biosynthesis initiates from condensation of acetate and malonate units catalyzed by the non-reducing PKS ptaA. As the ptaA protein is TE/CLC domain-deficient, hydrolysis and Claisen cyclization of the polyketide could be catalyzed by ptaB containing a beta-lactamase domain. The ptaB protein might hydrolyze the thioester bond between the ACP of ptaA and the intermediate to release atrochrysone carboxylic acid, which is spontaneously dehydrated to form endocrocin anthrone. Endocrocin anthrone is then converted to endocrocin, catalyzed by the anthrone oxygenase ptaC. Spontaneous decarboxylation of endocrocin occurs to generate emodin. An O-methyltransferase (ptaH or ptaI) could methylate emodin to form physcion. PtaJ could then catalyze the oxidative cleavage of physcion, and rotation of the intermediate could then afford desmethylisosulochrin. PtaF, a putative NADH-dependent oxidoreductase, might also participate in the oxidative cleavage step. Desmethylisosulochrin is then transformed by another O-methyltransferase (ptaH or ptaI) to form isosulochrin. Chlorination of isosulochrin by ptaM in the cyclohexadienone B ring then produces chloroisosulochrin. PtaE is responsible for the oxidative coupling reactions of both benzophenones isosulouchrin and chloroisosulochrin to RES-1214-1 and pestheic acid respectively, regardless of chlorination. In Pestalotiopsis fici (strain W106-1 / CGMCC3.15140), this protein is Oxidoreductase ptaF.